The sequence spans 131 residues: Protein NrdI (131 aa).

This sequence belongs to the NrdI family.

Its function is as follows. Probably involved in ribonucleotide reductase function. This Bacillus licheniformis (strain ATCC 14580 / DSM 13 / JCM 2505 / CCUG 7422 / NBRC 12200 / NCIMB 9375 / NCTC 10341 / NRRL NRS-1264 / Gibson 46) protein is Protein NrdI.